The sequence spans 177 residues: Nucleoside triphosphate/diphosphate phosphatase (177 aa).

Arg23 functions as the Proton donor in the catalytic mechanism. Residues Asn87, Asp103, Asp105, Asp107, Asp120, and Glu123 each coordinate Mg(2+).

It belongs to the Ntdp family. Requires Mg(2+) as cofactor.

It catalyses the reaction a ribonucleoside 5'-triphosphate + H2O = a ribonucleoside 5'-diphosphate + phosphate + H(+). The enzyme catalyses a ribonucleoside 5'-diphosphate + H2O = a ribonucleoside 5'-phosphate + phosphate + H(+). Its function is as follows. Has nucleoside phosphatase activity towards nucleoside triphosphates and nucleoside diphosphates. The chain is Nucleoside triphosphate/diphosphate phosphatase from Streptococcus thermophilus (strain ATCC BAA-491 / LMD-9).